A 448-amino-acid polypeptide reads, in one-letter code: Cytoplasmic tRNA 2-thiolation protein 2 (448 aa).

The protein belongs to the CTU2/NCS2 family.

It localises to the cytoplasm. It functions in the pathway tRNA modification; 5-methoxycarbonylmethyl-2-thiouridine-tRNA biosynthesis. Functionally, plays a central role in 2-thiolation of mcm(5)S(2)U at tRNA wobble positions of tRNA(Lys), tRNA(Glu) and tRNA(Gln). May act by forming a heterodimer with NCS6 that ligates sulfur from thiocarboxylated URM1 onto the uridine of tRNAs at wobble position. Prior mcm(5) tRNA modification by the elongator complex is required for 2-thiolation. May also be involved in protein urmylation. The polypeptide is Cytoplasmic tRNA 2-thiolation protein 2 (Debaryomyces hansenii (strain ATCC 36239 / CBS 767 / BCRC 21394 / JCM 1990 / NBRC 0083 / IGC 2968) (Yeast)).